Reading from the N-terminus, the 120-residue chain is Probable early E4 13 kDa protein (120 aa).

The protein is Probable early E4 13 kDa protein of Human adenovirus A serotype 12 (HAdV-12).